Consider the following 294-residue polypeptide: Zinc finger protein 346 (294 aa).

Met1 is subject to N-acetylmethionine. Over residues 1–19 (MECPAPDATDAADPGEAGP) the composition is skewed to low complexity. The tract at residues 1-35 (MECPAPDATDAADPGEAGPYKGSEEPEGREPDGVR) is disordered. Positions 22 to 35 (GSEEPEGREPDGVR) are enriched in basic and acidic residues. Residues 70 to 104 (FTSTQCKVCCAMLISESQKLAHYQSKKHANKVKRY) form a Matrin-type 1 zinc finger. Zn(2+) is bound by residues Cys75, Cys78, His91, and His97. Lys114 participates in a covalent cross-link: Glycyl lysine isopeptide (Lys-Gly) (interchain with G-Cter in SUMO2). A Matrin-type 2 zinc finger spans residues 131 to 165 (DKNHCCPICNMTFSSPAVAQSHYLGKTHAKSLKLK). Cys136, Cys139, His152, and His158 together coordinate Zn(2+). Lys170 participates in a covalent cross-link: Glycyl lysine isopeptide (Lys-Gly) (interchain with G-Cter in SUMO2). 2 Matrin-type zinc fingers span residues 182–216 (DPDK…ETKL) and 236–270 (GKGY…SPKT). Positions 269-294 (KTLVTLGSQTPVQTQPTPKDSSTVQD) are disordered.

Forms a heteromeric complex with XPO5 and ILF3. Found in a nuclear export complex with XPO5, RAN, ILF3, ZNF346 and double-stranded RNA. Interacts with XPO5. Interacts with ILF3 in an RNA-independent manner. As to expression, expressed in all tissues tested, including heart, brain, spleen, lung, liver, muscle, kidney and testis. Exogenous expression induced apoptosis.

Its subcellular location is the nucleus. It localises to the nucleolus. The protein resides in the cytoplasm. In terms of biological role, binds with low affinity to dsDNA and ssRNA, and with high affinity to dsRNA, with no detectable sequence specificity. May bind to specific miRNA hairpins. The chain is Zinc finger protein 346 (Znf346) from Mus musculus (Mouse).